The following is a 285-amino-acid chain: Probable endonuclease 4 (285 aa).

Positions 67, 107, 144, 177, 180, 214, 227, 229, and 259 each coordinate Zn(2+).

It belongs to the AP endonuclease 2 family. It depends on Zn(2+) as a cofactor.

It catalyses the reaction Endonucleolytic cleavage to 5'-phosphooligonucleotide end-products.. In terms of biological role, endonuclease IV plays a role in DNA repair. It cleaves phosphodiester bonds at apurinic or apyrimidinic (AP) sites, generating a 3'-hydroxyl group and a 5'-terminal sugar phosphate. The chain is Probable endonuclease 4 from Persephonella marina (strain DSM 14350 / EX-H1).